We begin with the raw amino-acid sequence, 407 residues long: Probable protein S-acyltransferase 9 (407 aa).

2 helical membrane passes run 28 to 48 (WSIP…SVFV) and 62 to 82 (GHVF…LLFL). The DHHC domain occupies 136–179 (KYCDTCMLYRPPRCSHCSICNNCVERFDHHCPWRNYRYFFMFVS). C166 functions as the S-palmitoyl cysteine intermediate in the catalytic mechanism. Transmembrane regions (helical) follow at residues 174-194 (FFMF…MSAL) and 217-237 (AVML…LTGF). Residues 300-407 (LATTWERPEE…RSYAAAEEGR (108 aa)) are disordered. Residues 346–356 (DTAHHKIDIDQ) are compositionally biased toward basic and acidic residues.

The protein belongs to the DHHC palmitoyltransferase family. As to expression, mainly expressed in seeds.

It localises to the cell membrane. The catalysed reaction is L-cysteinyl-[protein] + hexadecanoyl-CoA = S-hexadecanoyl-L-cysteinyl-[protein] + CoA. In terms of biological role, palmitoyl acyltransferase. This chain is Probable protein S-acyltransferase 9 (PAT09), found in Arabidopsis thaliana (Mouse-ear cress).